Reading from the N-terminus, the 474-residue chain is 6-phospho-beta-glucosidase AscB (474 aa).

Glutamate 180 serves as the catalytic Proton donor. Glutamate 372 serves as the catalytic Nucleophile.

This sequence belongs to the glycosyl hydrolase 1 family.

It carries out the reaction 6-phospho-beta-D-glucosyl-(1-&gt;4)-D-glucose + H2O = D-glucose 6-phosphate + D-glucose. Its function is as follows. Can hydrolyze salicin, cellobiose, and probably arbutin. The chain is 6-phospho-beta-glucosidase AscB (ascB) from Escherichia coli (strain K12).